The sequence spans 623 residues: Glutathione import ATP-binding protein GsiA (623 aa).

ABC transporter domains follow at residues valine 15–leucine 269 and leucine 325–methionine 564. ATP contacts are provided by residues glycine 49–serine 56 and glycine 357–serine 364.

This sequence belongs to the ABC transporter superfamily. Glutathione importer (TC 3.A.1.5.11) family. As to quaternary structure, the complex is composed of two ATP-binding proteins (GsiA), two transmembrane proteins (GsiC and GsiD) and a solute-binding protein (GsiB).

It localises to the cell inner membrane. It catalyses the reaction glutathione(out) + ATP + H2O = glutathione(in) + ADP + phosphate + H(+). Functionally, part of the ABC transporter complex GsiABCD involved in glutathione import. Responsible for energy coupling to the transport system. The sequence is that of Glutathione import ATP-binding protein GsiA from Salmonella choleraesuis (strain SC-B67).